The sequence spans 578 residues: NADPH oxidase 4 (578 aa).

The Cytoplasmic portion of the chain corresponds to 1–16 (MALSWRSWLANEGVKH). Residues 17-37 (LCLLVWLSLNVLLFWKTFLLY) traverse the membrane as a helical segment. Over 38 to 62 (NQGPEYYYIHQMLGLGLCLSRASAS) the chain is Extracellular. A Ferric oxidoreductase domain is found at 58-303 (RASASVLNLN…YCAERLYRCI (246 aa)). A helical membrane pass occupies residues 63-83 (VLNLNCSLILLPMCRTVLAYL). Residues 84-104 (RGSQKVPSRRTRRLLDKSKTL) are Cytoplasmic-facing. The helical transmembrane segment at 105–125 (HITCGITICIFSGVHVAAHLV) threads the bilayer. The Extracellular portion of the chain corresponds to 126–154 (NALNFSVNYSEHFLALNAARYQNEDPRKL). Asn-133 carries an N-linked (GlcNAc...) asparagine glycan. A helical membrane pass occupies residues 155 to 175 (LFTTVPGLTGVCMVVVLFLMV). The Cytoplasmic portion of the chain corresponds to 176 to 188 (TASTYAIRVSNYD). Residues 189-209 (IFWYTHNLFFVFYMLLLLHVS) form a helical membrane-spanning segment. The Extracellular segment spans residues 210–424 (GGLLKYQTNL…SPFEESLNYE (215 aa)). The segment at 218–273 (NLDTHPPGCISLNRTPSQNMSIADYVSEHFHGSLPGGFSKLEDHYQKTLVKICLEE) is E-loop; essential for H2O2 generating catalytic activity. The tract at residues 248 to 575 (HGSLPGGFSK…YGTKFEYNKE (328 aa)) is mediates interaction with TLR4. One can recognise an FAD-binding FR-type domain in the interval 304–419 (RSNKPVTIIS…DGPFGSPFEE (116 aa)). A helical membrane pass occupies residues 425–445 (VSLCVAGGIGVTPFASILNTL). The Cytoplasmic segment spans residues 446-578 (LDDWKPYKLR…KFEYNKESFS (133 aa)).

As to quaternary structure, interacts with TLR4. Interacts with, relocalizes and stabilizes CYBA/p22phox. Interacts with protein disulfide isomerase. Interacts with PPP1R15A. Interacts with LRRC8A; this interaction prevents the ubiquitin-mediated degradation of LRRC8A. Heme is required as a cofactor. N-glycosylation is required for the function. As to expression, expressed in vascular smooth muscle.

It is found in the cytoplasm. The protein resides in the endoplasmic reticulum membrane. It localises to the cell membrane. Its subcellular location is the cell junction. The protein localises to the focal adhesion. It is found in the nucleus. The catalysed reaction is NADPH + 2 O2 = 2 superoxide + NADP(+) + H(+). It carries out the reaction NADPH + O2 + H(+) = H2O2 + NADP(+). Activated by insulin. Inhibited by diphenylene iodonium. Inhibited by plumbagin. Activated by phorbol 12-myristate 13-acetate (PMA). In terms of biological role, NADPH oxidase that catalyzes predominantly the reduction of oxygen to H2O2. Can also catalyze to a smaller extent, the reduction of oxygen to superoxide. May function as an oxygen sensor regulating the KCNK3/TASK-1 potassium channel and HIF1A activity. May regulate insulin signaling cascade. May play a role in apoptosis, bone resorption and lipolysaccharide-mediated activation of NFKB. May produce superoxide in the nucleus and play a role in regulating gene expression upon cell stimulation. Promotes ferroptosis, reactive oxygen species production and reduced glutathione (GSH) levels by activating NLRP3 inflammasome activation and cytokine release. The protein is NADPH oxidase 4 (Nox4) of Rattus norvegicus (Rat).